The chain runs to 285 residues: Probable E3 ubiquitin-protein ligase IE1 (285 aa).

At 1-201 (MASKDSDVRC…LPGYWDRDDR (201 aa)) the chain is on the cytoplasmic side. An RING-CH-type zinc finger spans residues 124–183 (SIDEEGKQCWICRDGESLPEARYCNCYGDLQYCHEECLKTWISMSGEKKCKFCQTPYKVN). Residues C132, C135, C147, C149, H157, C160, C173, and C176 each coordinate Zn(2+). A helical membrane pass occupies residues 202–222 (FVFIAGFIGMGTILAGWIASF). The Extracellular segment spans residues 223–238 (FYLLVVLCGKYFTYKD). The helical transmembrane segment at 239 to 259 (VMIVVGGLAIIQVVGLMFSLF) threads the bilayer. Residues 260–285 (MYFQIGNLLRQYINYMTETNIDPLRT) lie on the Cytoplasmic side of the membrane.

It localises to the membrane. It catalyses the reaction S-ubiquitinyl-[E2 ubiquitin-conjugating enzyme]-L-cysteine + [acceptor protein]-L-lysine = [E2 ubiquitin-conjugating enzyme]-L-cysteine + N(6)-ubiquitinyl-[acceptor protein]-L-lysine.. The protein operates within protein modification; protein ubiquitination. Its function is as follows. Controls the expression of later classes of genes and also of the IE genes (Potential). E3 ubiquitin-protein ligase. E3 ubiquitin ligases accept ubiquitin from an E2 ubiquitin-conjugating enzyme in the form of a thioester and then directly transfer the ubiquitin to targeted substrates. This is Probable E3 ubiquitin-protein ligase IE1 (IE1) from Bovine herpesvirus 4 (strain DN-599) (BoHV-4).